Reading from the N-terminus, the 466-residue chain is MNSEGGKPGNVLTVNGNYTGNNGLMTFNATLGGDNSPTDKMNVKGDTQGNTRVRVDNIGGVGAQTVNGIELIEVGGNSAGNFALTTGTVEAGAYVYTLAKGKGNDEKNWYLTSKWDGVTPADTPDPINNPPVVDPEGPSVYRPEAGSYISNIAAANSLFSHRLHDRLGEPQYTDSLHSQGSASSMWMRHVGGHERSRAGDGQLNTQANRYVLQLGGDLAQWSSNAQDRWHLGVMAGYANQHSNTQSNRVGYKSDGRISGYSAGLYATWYQNDANKTGAYVDSWALYNWFDNSVSSDNRSADDYDSRGVTASVEGGYTFEAGTFSGSEGTLNTWYVQPQAQITWMGVKDSDHTRKDGTRIETEGDGNVQTRLGVKTYLNSHHQRDDGKQREFQPYIEANWINNSKVYAVKMNGQTVGREGARNLGEVRTGVEAKVNNNLSLWGNVGVQLGDKGYSDTQGMLGVKYSW.

Residues 178–466 enclose the Autotransporter domain; that stretch reads SQGSASSMWM…QGMLGVKYSW (289 aa).

This is an uncharacterized protein from Escherichia coli (strain K12).